We begin with the raw amino-acid sequence, 413 residues long: uncharacterized protein (413 aa).

This sequence belongs to the mimivirus L17x/L18x family.

This is an uncharacterized protein from Acanthamoeba polyphaga (Amoeba).